A 792-amino-acid polypeptide reads, in one-letter code: Protocadherin beta-18 (792 aa).

Positions Met-1–Ala-26 are cleaved as a signal peptide. Cadherin domains follow at residues Gly-27–Phe-133, Gln-134–Phe-242, Pro-243–Leu-347, Ile-348–Phe-451, Asn-452–Val-561, and Ala-568–Val-676. Asn-169 carries N-linked (GlcNAc...) asparagine glycosylation. 2 N-linked (GlcNAc...) asparagine glycosylation sites follow: Asn-418 and Asn-452. A helical membrane pass occupies residues Val-693–Val-713.

It localises to the cell membrane. Functionally, potential calcium-dependent cell-adhesion protein. The protein is Protocadherin beta-18 (Pcdhb18) of Mus musculus (Mouse).